The chain runs to 254 residues: Hydroxyacylglutathione hydrolase (254 aa).

Residues histidine 53, histidine 55, aspartate 57, histidine 58, histidine 111, aspartate 128, and histidine 166 each coordinate Zn(2+).

It belongs to the metallo-beta-lactamase superfamily. Glyoxalase II family. Monomer. The cofactor is Zn(2+).

The enzyme catalyses an S-(2-hydroxyacyl)glutathione + H2O = a 2-hydroxy carboxylate + glutathione + H(+). The protein operates within secondary metabolite metabolism; methylglyoxal degradation; (R)-lactate from methylglyoxal: step 2/2. Functionally, thiolesterase that catalyzes the hydrolysis of S-D-lactoyl-glutathione to form glutathione and D-lactic acid. The protein is Hydroxyacylglutathione hydrolase of Aeromonas hydrophila subsp. hydrophila (strain ATCC 7966 / DSM 30187 / BCRC 13018 / CCUG 14551 / JCM 1027 / KCTC 2358 / NCIMB 9240 / NCTC 8049).